Here is an 86-residue protein sequence, read N- to C-terminus: RNA-binding protein Hfq (86 aa).

One can recognise a Sm domain in the interval 9 to 68 (DPYLNTLRKEKVPVSIYLVNGIKLQGSIESFDQFVVLLKNTVSQMVYKHAISTVVPARPV). Residues 66–86 (RPVRLPSPSDSEHGDSEPGNA) form a disordered region. The segment covering 75–86 (DSEHGDSEPGNA) has biased composition (basic and acidic residues).

The protein belongs to the Hfq family. Homohexamer.

Functionally, RNA chaperone that binds small regulatory RNA (sRNAs) and mRNAs to facilitate mRNA translational regulation in response to envelope stress, environmental stress and changes in metabolite concentrations. Also binds with high specificity to tRNAs. This Pseudomonas putida (strain W619) protein is RNA-binding protein Hfq.